The sequence spans 313 residues: Ribosomal RNA small subunit methyltransferase H (313 aa).

Residues 33–35 (AGH), Glu52, Phe80, Asp101, and Gln108 contribute to the S-adenosyl-L-methionine site.

Belongs to the methyltransferase superfamily. RsmH family.

Its subcellular location is the cytoplasm. It catalyses the reaction cytidine(1402) in 16S rRNA + S-adenosyl-L-methionine = N(4)-methylcytidine(1402) in 16S rRNA + S-adenosyl-L-homocysteine + H(+). In terms of biological role, specifically methylates the N4 position of cytidine in position 1402 (C1402) of 16S rRNA. In Spiroplasma kunkelii, this protein is Ribosomal RNA small subunit methyltransferase H.